Here is a 449-residue protein sequence, read N- to C-terminus: Exodeoxyribonuclease 7 large subunit (449 aa).

The protein belongs to the XseA family. As to quaternary structure, heterooligomer composed of large and small subunits.

Its subcellular location is the cytoplasm. It carries out the reaction Exonucleolytic cleavage in either 5'- to 3'- or 3'- to 5'-direction to yield nucleoside 5'-phosphates.. Its function is as follows. Bidirectionally degrades single-stranded DNA into large acid-insoluble oligonucleotides, which are then degraded further into small acid-soluble oligonucleotides. This chain is Exodeoxyribonuclease 7 large subunit, found in Aliivibrio fischeri (strain ATCC 700601 / ES114) (Vibrio fischeri).